The sequence spans 319 residues: Acetyl-coenzyme A carboxylase carboxyl transferase subunit beta (319 aa).

The 270-residue stretch at 24–293 folds into the CoA carboxyltransferase N-terminal domain; sequence LWIKCPDTGQ…MIEQEPEPSA (270 aa). Residues 282–319 are disordered; that stretch reads PEMIEQEPEPSAPVPPDEPDEPAATQEAPPAAPAAPPA.

It belongs to the AccD/PCCB family. As to quaternary structure, acetyl-CoA carboxylase is a heterohexamer composed of biotin carboxyl carrier protein (AccB), biotin carboxylase (AccC) and two subunits each of ACCase subunit alpha (AccA) and ACCase subunit beta (AccD).

The protein resides in the cytoplasm. It carries out the reaction N(6)-carboxybiotinyl-L-lysyl-[protein] + acetyl-CoA = N(6)-biotinyl-L-lysyl-[protein] + malonyl-CoA. Its pathway is lipid metabolism; malonyl-CoA biosynthesis; malonyl-CoA from acetyl-CoA: step 1/1. Functionally, component of the acetyl coenzyme A carboxylase (ACC) complex. Biotin carboxylase (BC) catalyzes the carboxylation of biotin on its carrier protein (BCCP) and then the CO(2) group is transferred by the transcarboxylase to acetyl-CoA to form malonyl-CoA. This chain is Acetyl-coenzyme A carboxylase carboxyl transferase subunit beta, found in Nitrobacter winogradskyi (strain ATCC 25391 / DSM 10237 / CIP 104748 / NCIMB 11846 / Nb-255).